A 172-amino-acid chain; its full sequence is Peptidyl-prolyl cis-trans isomerase (172 aa).

In terms of domain architecture, PPIase cyclophilin-type spans 7–170; that stretch reads FFDMTVGGAP…KVVKVADCGQ (164 aa).

It belongs to the cyclophilin-type PPIase family.

It localises to the cytoplasm. The catalysed reaction is [protein]-peptidylproline (omega=180) = [protein]-peptidylproline (omega=0). With respect to regulation, binds cyclosporin A (CsA). CsA mediates some of its effects via an inhibitory action on PPIase. Its function is as follows. PPIases accelerate the folding of proteins. It catalyzes the cis-trans isomerization of proline imidic peptide bonds in oligopeptides. This Zea mays (Maize) protein is Peptidyl-prolyl cis-trans isomerase (CYP).